A 388-amino-acid chain; its full sequence is AdoMet-dependent heme synthase (388 aa).

The span at methionine 1 to histidine 12 shows a compositional bias: low complexity. The segment at methionine 1–proline 29 is disordered. One can recognise a Radical SAM core domain in the interval aspartate 34 to alanine 257. Positions 50, 54, and 57 each coordinate [4Fe-4S] cluster.

The protein belongs to the radical SAM superfamily. It depends on [4Fe-4S] cluster as a cofactor.

The enzyme catalyses Fe-coproporphyrin III + 2 S-adenosyl-L-methionine = heme b + 2 5'-deoxyadenosine + 2 L-methionine + 2 CO2. It participates in porphyrin-containing compound metabolism; protoheme biosynthesis. Its function is as follows. Involved in siroheme-dependent heme b biosynthesis. Catalyzes the conversion of Fe-coproporphyrin III into heme by the oxidative decarboxylation of two propionate side chains. This is AdoMet-dependent heme synthase from Oleidesulfovibrio alaskensis (strain ATCC BAA-1058 / DSM 17464 / G20) (Desulfovibrio alaskensis).